The sequence spans 331 residues: Lipoyl synthase (331 aa).

[4Fe-4S] cluster contacts are provided by cysteine 57, cysteine 62, cysteine 68, cysteine 83, cysteine 87, cysteine 90, and serine 294. Residues 69–283 (WEDREATFLI…KAEAEAIGFL (215 aa)) enclose the Radical SAM core domain.

The protein belongs to the radical SAM superfamily. Lipoyl synthase family. [4Fe-4S] cluster is required as a cofactor.

Its subcellular location is the cytoplasm. It carries out the reaction [[Fe-S] cluster scaffold protein carrying a second [4Fe-4S](2+) cluster] + N(6)-octanoyl-L-lysyl-[protein] + 2 oxidized [2Fe-2S]-[ferredoxin] + 2 S-adenosyl-L-methionine + 4 H(+) = [[Fe-S] cluster scaffold protein] + N(6)-[(R)-dihydrolipoyl]-L-lysyl-[protein] + 4 Fe(3+) + 2 hydrogen sulfide + 2 5'-deoxyadenosine + 2 L-methionine + 2 reduced [2Fe-2S]-[ferredoxin]. Its pathway is protein modification; protein lipoylation via endogenous pathway; protein N(6)-(lipoyl)lysine from octanoyl-[acyl-carrier-protein]: step 2/2. Its function is as follows. Catalyzes the radical-mediated insertion of two sulfur atoms into the C-6 and C-8 positions of the octanoyl moiety bound to the lipoyl domains of lipoate-dependent enzymes, thereby converting the octanoylated domains into lipoylated derivatives. The polypeptide is Lipoyl synthase (Clavibacter michiganensis subsp. michiganensis (strain NCPPB 382)).